Consider the following 144-residue polypeptide: Interleukin-9 (144 aa).

Residues 1–18 (MLLAMVLTSALLLCSVAG) form the signal peptide. The residue at position 19 (Gln-19) is a Pyrrolidone carboxylic acid. 4 N-linked (GlcNAc...) asparagine glycosylation sites follow: Asn-50, Asn-63, Asn-78, and Asn-114.

This sequence belongs to the IL-7/IL-9 family. Interacts with IL9R. Interacts with IL2RG.

It is found in the secreted. Its function is as follows. Multifunctional cytokine secreted mainly by T-helper 2 lymphocytes and also mast cells or NKT cells that plays important roles in the immune response against parasites. Affects intestinal epithelial permeability and adaptive immunity. In addition, induces the differentiation of specific T-cell subsets such as IL-17 producing helper T-cells (TH17) and also proliferation and differentiation of mast cells. Mechanistically, exerts its biological effects through a receptor composed of IL9R subunit and a signal transducing subunit IL2RG. Receptor stimulation results in the rapid activation of JAK1 and JAK3 kinase activities leading to STAT1, STAT3 and STAT5-mediated transcriptional programs. Induction of differentiation genes seems to be mediated by STAT1 alone, while protection of cells from apoptosis depends on STAT3 and STAT5. This Homo sapiens (Human) protein is Interleukin-9 (IL9).